A 613-amino-acid polypeptide reads, in one-letter code: DNA mismatch repair protein MutL (613 aa).

Belongs to the DNA mismatch repair MutL/HexB family.

This protein is involved in the repair of mismatches in DNA. It is required for dam-dependent methyl-directed DNA mismatch repair. May act as a 'molecular matchmaker', a protein that promotes the formation of a stable complex between two or more DNA-binding proteins in an ATP-dependent manner without itself being part of a final effector complex. The polypeptide is DNA mismatch repair protein MutL (Bradyrhizobium sp. (strain ORS 278)).